Here is a 198-residue protein sequence, read N- to C-terminus: Cytochrome c oxidase assembly protein CtaG (198 aa).

Topologically, residues 1–12 (MADTGQSDRKER) are cytoplasmic. A helical; Signal-anchor for type II membrane protein membrane pass occupies residues 13 to 35 (SNGVIVGTCLAFVVGMVGMAYAA). Topologically, residues 36–198 (VPLYDMFCRV…QVKSRTENKL (163 aa)) are periplasmic.

It belongs to the COX11/CtaG family.

Its subcellular location is the cell inner membrane. In terms of biological role, exerts its effect at some terminal stage of cytochrome c oxidase synthesis, probably by being involved in the insertion of the copper B into subunit I. The sequence is that of Cytochrome c oxidase assembly protein CtaG from Sinorhizobium medicae (strain WSM419) (Ensifer medicae).